Here is a 159-residue protein sequence, read N- to C-terminus: MNKQISKKPAQRTIALNKKALHDYYVEQRFEAGLVLEGWEVKSIRAGRVQLRDSYVVFKGGEAWLIGAHLSPLPNVAEYMKADPQRSRKLLLNKREIGKLFGAVQKQGLTVVPLDLHWHKNHVKVEIVLAKGKKTHDKRETIKRREWEREKHRVLKSHG.

Belongs to the SmpB family.

It localises to the cytoplasm. In terms of biological role, required for rescue of stalled ribosomes mediated by trans-translation. Binds to transfer-messenger RNA (tmRNA), required for stable association of tmRNA with ribosomes. tmRNA and SmpB together mimic tRNA shape, replacing the anticodon stem-loop with SmpB. tmRNA is encoded by the ssrA gene; the 2 termini fold to resemble tRNA(Ala) and it encodes a 'tag peptide', a short internal open reading frame. During trans-translation Ala-aminoacylated tmRNA acts like a tRNA, entering the A-site of stalled ribosomes, displacing the stalled mRNA. The ribosome then switches to translate the ORF on the tmRNA; the nascent peptide is terminated with the 'tag peptide' encoded by the tmRNA and targeted for degradation. The ribosome is freed to recommence translation, which seems to be the essential function of trans-translation. In Coxiella burnetii (strain RSA 493 / Nine Mile phase I), this protein is SsrA-binding protein.